Consider the following 244-residue polypeptide: MSFNLIVDQGNSACKVAFVRNNSIESISFLPGKAGQALSHLVAPHRFDKAIYSSVGLPDEEAEAIVRSCAAASLMMGTETPVPLRLQYDRRTLGADRLAAVVGAHSLYPNTELLVIDAGTAITYERVSAEGIYLGGNISPGLHLRFKALHLFTGRLPLIDPSGISPKIAEYGSSTEEAITAGVIHGLAGEIDRYIDDLHAKEGRSAVILTGGDANYLARIIRSGILIHPDLVLLGLNRILEYNV.

8–15 contributes to the ATP binding site; sequence DQGNSACK. Residues Tyr88 and 94 to 97 each bind substrate; that span reads GADR. The active-site Proton acceptor is the Asp96. Asp117 lines the K(+) pocket. Residue Thr120 coordinates ATP. Residue Thr175 coordinates substrate.

It belongs to the type III pantothenate kinase family. As to quaternary structure, homodimer. Requires NH4(+) as cofactor. It depends on K(+) as a cofactor.

It localises to the cytoplasm. It carries out the reaction (R)-pantothenate + ATP = (R)-4'-phosphopantothenate + ADP + H(+). The protein operates within cofactor biosynthesis; coenzyme A biosynthesis; CoA from (R)-pantothenate: step 1/5. Functionally, catalyzes the phosphorylation of pantothenate (Pan), the first step in CoA biosynthesis. The polypeptide is Type III pantothenate kinase (Porphyromonas gingivalis (strain ATCC BAA-308 / W83)).